Reading from the N-terminus, the 271-residue chain is Formamidopyrimidine-DNA glycosylase (271 aa).

Proline 2 functions as the Schiff-base intermediate with DNA in the catalytic mechanism. Glutamate 3 (proton donor) is an active-site residue. Lysine 58 functions as the Proton donor; for beta-elimination activity in the catalytic mechanism. DNA is bound by residues histidine 92, arginine 111, and arginine 152. An FPG-type zinc finger spans residues 237–271; sequence YVYGKVQKPCRICNNIITLIRQNGRSTYFCNACQN. The active-site Proton donor; for delta-elimination activity is arginine 261.

This sequence belongs to the FPG family. In terms of assembly, monomer. Zn(2+) is required as a cofactor.

It catalyses the reaction Hydrolysis of DNA containing ring-opened 7-methylguanine residues, releasing 2,6-diamino-4-hydroxy-5-(N-methyl)formamidopyrimidine.. The enzyme catalyses 2'-deoxyribonucleotide-(2'-deoxyribose 5'-phosphate)-2'-deoxyribonucleotide-DNA = a 3'-end 2'-deoxyribonucleotide-(2,3-dehydro-2,3-deoxyribose 5'-phosphate)-DNA + a 5'-end 5'-phospho-2'-deoxyribonucleoside-DNA + H(+). Involved in base excision repair of DNA damaged by oxidation or by mutagenic agents. Acts as a DNA glycosylase that recognizes and removes damaged bases. Has a preference for oxidized purines, such as 7,8-dihydro-8-oxoguanine (8-oxoG). Has AP (apurinic/apyrimidinic) lyase activity and introduces nicks in the DNA strand. Cleaves the DNA backbone by beta-delta elimination to generate a single-strand break at the site of the removed base with both 3'- and 5'-phosphates. The protein is Formamidopyrimidine-DNA glycosylase of Wolbachia pipientis subsp. Culex pipiens (strain wPip).